The chain runs to 409 residues: Astacin-like metalloendopeptidase (409 aa).

An N-terminal signal peptide occupies residues 1 to 19; the sequence is MDLKMLLIFIAFLLPSVLG. The segment covering 30-39 has biased composition (low complexity); that stretch reads TATTESTQVT. A disordered region spans residues 30 to 54; the sequence is TATTESTQVTTEEDIYDSPSPAETD. The Peptidase M12A domain occupies 87-285; sequence SAINCRNCYW…AKINRLYNCS (199 aa). Cystine bridges form between Cys91–Cys94, Cys134–Cys284, Cys155–Cys175, Cys287–Cys313, and Cys339–Cys362. His183 contributes to the Zn(2+) binding site. Glu184 is an active-site residue. Zn(2+) is bound by residues His187 and His193. In terms of domain architecture, CUB spans 287–399; sequence CSTIIDAAFG…SGFQATFTSA (113 aa).

The cofactor is Zn(2+). In terms of tissue distribution, expressed in ovary and gonads.

It localises to the cytoplasm. The protein localises to the cell membrane. The protein resides in the cytoplasmic vesicle. It is found in the secretory vesicle. Its subcellular location is the cortical granule. Probable oocyte-specific oolemmal receptor involved in sperm and egg adhesion and fertilization. May act as a protease. The protein is Astacin-like metalloendopeptidase (ASTL) of Gallus gallus (Chicken).